The primary structure comprises 231 residues: GrpE protein homolog, mitochondrial (231 aa).

The disordered stretch occupies residues 49–71; that stretch reads SEKAGEKAEEKAEEQNLSAEEQK.

The protein belongs to the GrpE family. As to quaternary structure, component of the PAM complex, at least composed of mtHsp70, MGE1, TIM44, PAM16, PAM17 and PAM18.

It localises to the mitochondrion matrix. In terms of biological role, essential component of the PAM complex, a complex required for the translocation of transit peptide-containing proteins from the inner membrane into the mitochondrial matrix in an ATP-dependent manner. Seems to control the nucleotide-dependent binding of SSC1 to substrate proteins. The chain is GrpE protein homolog, mitochondrial (mge1) from Candida glabrata (strain ATCC 2001 / BCRC 20586 / JCM 3761 / NBRC 0622 / NRRL Y-65 / CBS 138) (Yeast).